The sequence spans 500 residues: Lysine--tRNA ligase (500 aa).

D412 and E419 together coordinate Mg(2+).

Belongs to the class-II aminoacyl-tRNA synthetase family. As to quaternary structure, homodimer. Requires Mg(2+) as cofactor.

The protein resides in the cytoplasm. It carries out the reaction tRNA(Lys) + L-lysine + ATP = L-lysyl-tRNA(Lys) + AMP + diphosphate. This is Lysine--tRNA ligase from Kineococcus radiotolerans (strain ATCC BAA-149 / DSM 14245 / SRS30216).